Reading from the N-terminus, the 752-residue chain is DNA ligase (752 aa).

Residues 1–25 (MKRNGFVPSNSVGRRGIPSNSTSSA) form a disordered region. NAD(+) contacts are provided by residues 91-95 (DADFD), 140-141 (SL), and E170. The N6-AMP-lysine intermediate role is filled by K172. Residues R193, E233, K350, and K374 each coordinate NAD(+). Zn(2+) contacts are provided by C474, C477, C493, and C499. Residues 669–752 (STPRTLAGLT…TLLDGGPAAL (84 aa)) enclose the BRCT domain.

This sequence belongs to the NAD-dependent DNA ligase family. LigA subfamily. Mg(2+) serves as cofactor. Mn(2+) is required as a cofactor.

It carries out the reaction NAD(+) + (deoxyribonucleotide)n-3'-hydroxyl + 5'-phospho-(deoxyribonucleotide)m = (deoxyribonucleotide)n+m + AMP + beta-nicotinamide D-nucleotide.. In terms of biological role, DNA ligase that catalyzes the formation of phosphodiester linkages between 5'-phosphoryl and 3'-hydroxyl groups in double-stranded DNA using NAD as a coenzyme and as the energy source for the reaction. It is essential for DNA replication and repair of damaged DNA. In Nocardioides sp. (strain ATCC BAA-499 / JS614), this protein is DNA ligase.